The following is a 201-amino-acid chain: ATP-dependent Clp protease proteolytic subunit (201 aa).

Serine 98 (nucleophile) is an active-site residue. Histidine 123 is a catalytic residue.

Belongs to the peptidase S14 family. As to quaternary structure, fourteen ClpP subunits assemble into 2 heptameric rings which stack back to back to give a disk-like structure with a central cavity, resembling the structure of eukaryotic proteasomes.

It localises to the cytoplasm. It carries out the reaction Hydrolysis of proteins to small peptides in the presence of ATP and magnesium. alpha-casein is the usual test substrate. In the absence of ATP, only oligopeptides shorter than five residues are hydrolyzed (such as succinyl-Leu-Tyr-|-NHMec, and Leu-Tyr-Leu-|-Tyr-Trp, in which cleavage of the -Tyr-|-Leu- and -Tyr-|-Trp bonds also occurs).. In terms of biological role, cleaves peptides in various proteins in a process that requires ATP hydrolysis. Has a chymotrypsin-like activity. Plays a major role in the degradation of misfolded proteins. The protein is ATP-dependent Clp protease proteolytic subunit of Rickettsia peacockii (strain Rustic).